A 395-amino-acid chain; its full sequence is Cytoplasmic tRNA 2-thiolation protein 1 (395 aa).

A compositionally biased stretch (basic residues) spans 297–309 (TVAYKNKNKNKKK). The disordered stretch occupies residues 297–335 (TVAYKNKNKNKKKSNSEQEEQEKQEQEVNPDGSISLNRN).

Belongs to the TtcA family. CTU1/NCS6/ATPBD3 subfamily.

The protein resides in the cytoplasm. The protein operates within tRNA modification; 5-methoxycarbonylmethyl-2-thiouridine-tRNA biosynthesis. Plays a central role in 2-thiolation of mcm(5)S(2)U at tRNA wobble positions of tRNA(Lys), tRNA(Glu) and tRNA(Gln). Directly binds tRNAs and probably acts by catalyzing adenylation of tRNAs, an intermediate required for 2-thiolation. It is unclear whether it acts as a sulfurtransferase that transfers sulfur from thiocarboxylated URM1 onto the uridine of tRNAs at wobble position. Prior mcm(5) tRNA modification by the elongator complex is required for 2-thiolation. May also be involved in protein urmylation. In Candida albicans (strain SC5314 / ATCC MYA-2876) (Yeast), this protein is Cytoplasmic tRNA 2-thiolation protein 1.